The primary structure comprises 508 residues: Photosystem II CP47 reaction center protein (508 aa).

6 helical membrane passes run 21–36 (SVHI…WAGS), 101–115 (IVFS…IWHW), 140–156 (GIHL…SGAF), 203–218 (IAAG…FHLS), 237–252 (VLSS…AFIV), and 457–472 (TFAL…HGAR).

Belongs to the PsbB/PsbC family. PsbB subfamily. PSII is composed of 1 copy each of membrane proteins PsbA, PsbB, PsbC, PsbD, PsbE, PsbF, PsbH, PsbI, PsbJ, PsbK, PsbL, PsbM, PsbT, PsbX, PsbY, PsbZ, Psb30/Ycf12, at least 3 peripheral proteins of the oxygen-evolving complex and a large number of cofactors. It forms dimeric complexes. Requires Binds multiple chlorophylls. PSII binds additional chlorophylls, carotenoids and specific lipids. as cofactor.

The protein localises to the plastid. Its subcellular location is the chloroplast thylakoid membrane. Functionally, one of the components of the core complex of photosystem II (PSII). It binds chlorophyll and helps catalyze the primary light-induced photochemical processes of PSII. PSII is a light-driven water:plastoquinone oxidoreductase, using light energy to abstract electrons from H(2)O, generating O(2) and a proton gradient subsequently used for ATP formation. This is Photosystem II CP47 reaction center protein from Cycas taitungensis (Prince sago).